Here is a 425-residue protein sequence, read N- to C-terminus: Putative E3 ubiquitin-protein ligase UBR7 (425 aa).

The segment at Glu44 to Asp116 adopts a UBR-type zinc-finger fold. A PHD-type; atypical zinc finger spans residues Gly132–Arg188. Glycyl lysine isopeptide (Lys-Gly) (interchain with G-Cter in SUMO2) cross-links involve residues Lys225 and Lys252. Positions Lys225–Asp246 are disordered. Ser264 carries the post-translational modification Phosphoserine. Lys274 participates in a covalent cross-link: Glycyl lysine isopeptide (Lys-Gly) (interchain with G-Cter in SUMO2). Ser354 is subject to Phosphoserine. Lys398 participates in a covalent cross-link: Glycyl lysine isopeptide (Lys-Gly) (interchain with G-Cter in SUMO2).

As to expression, expressed in sperm (at protein level).

The catalysed reaction is S-ubiquitinyl-[E2 ubiquitin-conjugating enzyme]-L-cysteine + [acceptor protein]-L-lysine = [E2 ubiquitin-conjugating enzyme]-L-cysteine + N(6)-ubiquitinyl-[acceptor protein]-L-lysine.. It functions in the pathway protein modification; protein ubiquitination. E3 ubiquitin-protein ligase which is a component of the N-end rule pathway. Recognizes and binds to proteins bearing specific N-terminal residues that are destabilizing according to the N-end rule, leading to their ubiquitination and subsequent degradation. The polypeptide is Putative E3 ubiquitin-protein ligase UBR7 (UBR7) (Homo sapiens (Human)).